The following is a 216-amino-acid chain: ATP-dependent Clp protease proteolytic subunit (216 aa).

Residue serine 120 is the Nucleophile of the active site. Histidine 145 is a catalytic residue.

This sequence belongs to the peptidase S14 family. Fourteen ClpP subunits assemble into 2 heptameric rings which stack back to back to give a disk-like structure with a central cavity, resembling the structure of eukaryotic proteasomes.

Its subcellular location is the cytoplasm. It carries out the reaction Hydrolysis of proteins to small peptides in the presence of ATP and magnesium. alpha-casein is the usual test substrate. In the absence of ATP, only oligopeptides shorter than five residues are hydrolyzed (such as succinyl-Leu-Tyr-|-NHMec, and Leu-Tyr-Leu-|-Tyr-Trp, in which cleavage of the -Tyr-|-Leu- and -Tyr-|-Trp bonds also occurs).. In terms of biological role, cleaves peptides in various proteins in a process that requires ATP hydrolysis. Has a chymotrypsin-like activity. Plays a major role in the degradation of misfolded proteins. This Cupriavidus metallidurans (strain ATCC 43123 / DSM 2839 / NBRC 102507 / CH34) (Ralstonia metallidurans) protein is ATP-dependent Clp protease proteolytic subunit.